The following is a 448-amino-acid chain: UDP-N-acetylmuramoylalanine--D-glutamate ligase (448 aa).

ATP is bound at residue 112–118; that stretch reads GSNAKST.

The protein belongs to the MurCDEF family.

It is found in the cytoplasm. The enzyme catalyses UDP-N-acetyl-alpha-D-muramoyl-L-alanine + D-glutamate + ATP = UDP-N-acetyl-alpha-D-muramoyl-L-alanyl-D-glutamate + ADP + phosphate + H(+). It functions in the pathway cell wall biogenesis; peptidoglycan biosynthesis. Cell wall formation. Catalyzes the addition of glutamate to the nucleotide precursor UDP-N-acetylmuramoyl-L-alanine (UMA). In Acinetobacter baumannii (strain ATCC 17978 / DSM 105126 / CIP 53.77 / LMG 1025 / NCDC KC755 / 5377), this protein is UDP-N-acetylmuramoylalanine--D-glutamate ligase.